The following is a 448-amino-acid chain: Divalent metal cation transporter MntH (448 aa).

11 consecutive transmembrane segments (helical) span residues 41–61, 69–89, 117–137, 147–167, 176–196, 215–235, 270–290, 307–327, 363–383, 384–404, and 424–444; these read LFAF…PGNW, SEFG…AVLL, GFVL…AEVI, FGIP…LVLF, IEVI…AEMV, IVTN…TVMP, FSLT…AAAF, LLNP…ALLA, VLAI…GINE, LLIF…IPLV, and IISW…LFYT.

The protein belongs to the NRAMP family.

The protein resides in the cell membrane. In terms of biological role, h(+)-stimulated, divalent metal cation uptake system. The chain is Divalent metal cation transporter MntH from Listeria welshimeri serovar 6b (strain ATCC 35897 / DSM 20650 / CCUG 15529 / CIP 8149 / NCTC 11857 / SLCC 5334 / V8).